Consider the following 51-residue polypeptide: Large ribosomal subunit protein eL39 (51 aa).

The protein belongs to the eukaryotic ribosomal protein eL39 family.

The chain is Large ribosomal subunit protein eL39 from Staphylothermus marinus (strain ATCC 43588 / DSM 3639 / JCM 9404 / F1).